Consider the following 478-residue polypeptide: Leukotoxin secretion protein D (478 aa).

Residues 1–59 lie on the Cytoplasmic side of the membrane; it reads MKIWLSGIYEFFLRYKNTWAEVWKIRKELDHPNRKKDESEFLPAHLDLIETPVSKKPRL. The chain crosses the membrane as a helical span at residues 60 to 80; sequence IAYLIMLFLVVAIVLASVSKV. Topologically, residues 81 to 478 are periplasmic; it reads EIVATAPGKL…ESVTESLRER (398 aa).

This sequence belongs to the membrane fusion protein (MFP) (TC 8.A.1) family.

The protein localises to the cell inner membrane. Its function is as follows. Involved in the transport of the Leukotoxin. This chain is Leukotoxin secretion protein D (lktD), found in Mannheimia haemolytica (Pasteurella haemolytica).